The sequence spans 438 residues: MRVLLVGGGGREHAIGEALARGGAELYVVSKHKNPGLARISRDYGISKETDVEKVVRFARMWNVDLAFIGPEAPLEAGIVNALEREGIPTVGPTKEAARLETNKAWAREFMERNDIPGRKLFKVFDDVEEMKAWIDEYGKPVVVKPLGLTGGKGVKVVGYQLKDNEEAKEYAEYLIKKDGKVLIEERTDGVEFTFQVFSDGRNVIPMPLVQDYPHAYEGDVGPITGGMGSYSCSNHILPFITKEDWKMALRTLEETIKAMRKEGYPYKGILYGQFMLSREGPVIIEYNARFGDPEAINVLSILEDNLVEIAEGIVKGRVRGAKFQEKATVVKYLAPKGYPENPIRGAEIMVNEEAIKEEGAKIVYASVDENMKLLGSRALAMVGVADTLEEAEKIAEAGIRHVRGPVFYRKDVGTKESIEKRIRTMKELGKEFEPNSC.

The 209-residue stretch at 108-316 (REFMERNDIP…LVEIAEGIVK (209 aa)) folds into the ATP-grasp domain. 135-194 (IDEYGKPVVVKPLGLTGGKGVKVVGYQLKDNEEAKEYAEYLIKKDGKVLIEERTDGVEFT) contributes to the ATP binding site. Mg(2+) is bound by residues Q274, E286, and N288. Mn(2+) contacts are provided by Q274, E286, and N288.

It belongs to the GARS family. It depends on Mg(2+) as a cofactor. Mn(2+) is required as a cofactor.

It catalyses the reaction 5-phospho-beta-D-ribosylamine + glycine + ATP = N(1)-(5-phospho-beta-D-ribosyl)glycinamide + ADP + phosphate + H(+). Its pathway is purine metabolism; IMP biosynthesis via de novo pathway; N(1)-(5-phospho-D-ribosyl)glycinamide from 5-phospho-alpha-D-ribose 1-diphosphate: step 2/2. This Pyrococcus abyssi (strain GE5 / Orsay) protein is Phosphoribosylamine--glycine ligase.